Here is a 392-residue protein sequence, read N- to C-terminus: S-adenosylmethionine synthase (392 aa).

Histidine 17 is an ATP binding site. Aspartate 19 contributes to the Mg(2+) binding site. Position 45 (glutamate 45) interacts with K(+). Glutamate 58 and glutamine 102 together coordinate L-methionine. Positions 102 to 112 (QSADIAQGVDA) are flexible loop. Residues 169-171 (DAK), 235-236 (KF), aspartate 244, 250-251 (RK), alanine 267, and lysine 271 each bind ATP. Aspartate 244 serves as a coordination point for L-methionine. Lysine 275 lines the L-methionine pocket.

This sequence belongs to the AdoMet synthase family. As to quaternary structure, homotetramer; dimer of dimers. Mg(2+) serves as cofactor. The cofactor is K(+).

It localises to the cytoplasm. The catalysed reaction is L-methionine + ATP + H2O = S-adenosyl-L-methionine + phosphate + diphosphate. Its pathway is amino-acid biosynthesis; S-adenosyl-L-methionine biosynthesis; S-adenosyl-L-methionine from L-methionine: step 1/1. Catalyzes the formation of S-adenosylmethionine (AdoMet) from methionine and ATP. The overall synthetic reaction is composed of two sequential steps, AdoMet formation and the subsequent tripolyphosphate hydrolysis which occurs prior to release of AdoMet from the enzyme. The polypeptide is S-adenosylmethionine synthase (Methylobacterium radiotolerans (strain ATCC 27329 / DSM 1819 / JCM 2831 / NBRC 15690 / NCIMB 10815 / 0-1)).